Here is a 636-residue protein sequence, read N- to C-terminus: Probable cyclin-dependent serine/threonine-protein kinase DDB_G0278487 (636 aa).

The interval 1-41 (MPSQSNNVITSSTASSSMSSSSNSSDASSTSSSNTNNAHSS) is disordered. Residues 64 to 343 (YEIISKIGEG…AEQALQSPFF (280 aa)) form the Protein kinase domain. ATP is bound by residues 70-78 (IGEGISGSV) and Lys-93. Residue Asp-184 is the Proton acceptor of the active site. 4 disordered regions span residues 378 to 408 (EQQK…QKKQ), 473 to 506 (KRQQ…NNSY), 527 to 555 (SETE…DEED), and 579 to 636 (NNQQ…LTIH). A compositionally biased stretch (basic and acidic residues) spans 473-485 (KRQQQEHEQRLQR). The span at 486–499 (EQQQQLNQLQQQKE) shows a compositional bias: low complexity. Positions 529–555 (TESEYESDEEDFYTEEEVEDYSSDEED) are enriched in acidic residues. Composition is skewed to low complexity over residues 579–594 (NNQQ…QQQQ) and 617–628 (NNNNGNNNNNNN).

Belongs to the protein kinase superfamily. CMGC Ser/Thr protein kinase family. CDC2/CDKX subfamily.

It carries out the reaction L-seryl-[protein] + ATP = O-phospho-L-seryl-[protein] + ADP + H(+). The enzyme catalyses L-threonyl-[protein] + ATP = O-phospho-L-threonyl-[protein] + ADP + H(+). The chain is Probable cyclin-dependent serine/threonine-protein kinase DDB_G0278487 from Dictyostelium discoideum (Social amoeba).